Reading from the N-terminus, the 1325-residue chain is Protein suppressor of sable (1325 aa).

Disordered stretches follow at residues 1 to 36 (MSVA…SKIQ) and 74 to 326 (VCLQ…GGSN). Over residues 9 to 30 (PLIDLEEDLEDGEIDDDEEDEQ) the composition is skewed to acidic residues. The segment covering 119–131 (RSSNQDTSDQSLE) has biased composition (polar residues). A highly charged region spans residues 138-327 (ATANPLLQST…GQEKMGGSNR (190 aa)). Basic residues predominate over residues 149-158 (SSRRRKRKKE). A coiled-coil region spans residues 149 to 179 (SSRRRKRKKEREREQKKDKEQQNRSRRDEND). Positions 159–178 (REREQKKDKEQQNRSRRDEN) are enriched in basic and acidic residues. Over residues 236–246 (AGLGAGGGGGY) the composition is skewed to gly residues. The stretch at 276 to 296 (NEKEHQRGVNNRKRRDRDRLE) forms a coiled coil. C3H1-type zinc fingers lie at residues 330 to 357 (PRKL…HKEF) and 358 to 381 (PCKY…HGEP). Residues 444-478 (KRQDHQMQQQQQQLQHQQLQQQQEQQQTQQQAAAD) are a coiled coil. Residues 499–509 (KRKSRWTEKMG) are compositionally biased toward basic and acidic residues. Disordered stretches follow at residues 499–535 (KRKS…LPPH), 588–622 (KAED…KSNG), 639–695 (FSGN…PSVF), 710–745 (SARQ…IGGG), 780–835 (AHSG…ALPP), 979–1058 (DLET…GGSK), 1143–1170 (EPNG…GGGV), and 1295–1325 (RGGH…NRNI). Serine 524 carries the phosphoserine modification. Positions 594 to 606 (PQTQAELESSTPP) are enriched in polar residues. A Phosphothreonine modification is found at threonine 604. A compositionally biased stretch (acidic residues) spans 644-668 (PLDDDRDDDEQLIIDDGNDSTAEED). The residue at position 663 (serine 663) is a Phosphoserine. Threonine 664 is subject to Phosphothreonine. Over residues 710 to 726 (SARQLLPASATSPNQEN) the composition is skewed to polar residues. The segment covering 790–800 (SNENSNSNSHS) has biased composition (low complexity). Pro residues predominate over residues 1003–1015 (SVPPPSMRVPPPN). Basic and acidic residues predominate over residues 1021–1033 (PTVRTDPRRDPRR). Over residues 1042-1056 (GASTANTTAPNASGG) the composition is skewed to low complexity. 2 stretches are compositionally biased toward gly residues: residues 1149–1170 (AALG…GGGV) and 1295–1309 (RGGH…GNGN).

It belongs to the suppressor of sable family. Interacts with Wdr82.

Its subcellular location is the nucleus. The protein localises to the chromosome. In terms of biological role, RNA-binding protein that suppresses transcription of some RNAs. Together with Wdr82, part of a transcription termination checkpoint that promotes transcription termination of RNAs and their subsequent degradation by the nuclear exosome. Promotes transcription termination of aberrant RNAs, transcripts from genes containing a transposon inserted at their very 5' end or RNAs from heat-shock-inducible repetitive element. Binds RNA preferentially at a sequence that resembles a cryptic 5'-splice site. This is Protein suppressor of sable from Drosophila melanogaster (Fruit fly).